The sequence spans 257 residues: DNA repair protein RecO (257 aa).

Belongs to the RecO family.

Involved in DNA repair and RecF pathway recombination. The protein is DNA repair protein RecO of Streptococcus thermophilus (strain CNRZ 1066).